The following is a 391-amino-acid chain: Multidrug resistance protein MdtL (391 aa).

A run of 12 helical transmembrane segments spans residues 4–24 (FLIC…MYLV), 42–62 (IAFS…GKVA), 69–89 (PVAI…SLAE), 93–113 (LFLA…VVAF), 131–151 (LLNG…HLIM), 158–178 (SLFW…LFIL), 203–222 (FFLS…LTFV), 245–265 (ALTA…LGIF), 269–289 (TLMI…AVSP), 293–313 (ISLF…GVAM), 324–346 (AGVA…IWLA), and 363–383 (ACSI…PVAA).

Belongs to the major facilitator superfamily. DHA1 family. MdtL (TC 2.A.1.2.22) subfamily.

It localises to the cell inner membrane. Confers resistance to chloramphenicol. The sequence is that of Multidrug resistance protein MdtL from Escherichia fergusonii (strain ATCC 35469 / DSM 13698 / CCUG 18766 / IAM 14443 / JCM 21226 / LMG 7866 / NBRC 102419 / NCTC 12128 / CDC 0568-73).